A 289-amino-acid chain; its full sequence is Caffeoylpyruvate hydrolase (289 aa).

A divalent metal cation is bound by residues Glu-140, Glu-142, and Asp-171.

This sequence belongs to the FAH family. Homodimer. The cofactor is Mg(2+). It depends on Mn(2+) as a cofactor.

The enzyme catalyses (E)-caffeoylpyruvate + H2O = (E)-caffeate + pyruvate + H(+). Its pathway is secondary metabolite biosynthesis. Caffeoylpyruvate hydrolase; part of the gene cluster that mediates the fungal bioluminescence cycle. Involved in the recycling of oxyluciferin, a pyruvic acid adduct of caffeic acid, to caffeic acid. The fungal bioluminescence cycle begins with the hispidin synthetase that catalyzes the formation of hispidin which is further hydroxylated by the hispidin-3-hydroxylase, yielding the fungal luciferin 3-hydroxyhispidin. The luciferase then produces an endoperoxide as a high-energy intermediate with decomposition that yields oxyluciferin (also known as caffeoylpyruvate) and light emission. Oxyluciferin can be recycled to caffeic acid by caffeoylpyruvate hydrolase. The sequence is that of Caffeoylpyruvate hydrolase from Neonothopanus nambi (Agaricus nambi).